A 232-amino-acid chain; its full sequence is MVEIEIEPHEEFEGVYWAIFEDGRKKPATENLVPGHQVYGERLVEYDGKEYRVWEPRRSKLAAMIMNGMEYFPFEEGSKVLYLGAAAGTTPSHVSDIIKESGVEYCVEFASRMMQELIPVCEKRPNMIPILGDATKPHGYAPLVEQVDVIYQDIAQPKQAEVVADNAEAFLRPGGYVIVAIKARSIDVTKEPEEVFEDEERKLEERGFEVLEVIDLEPYERDHVGIVAEYHG.

S-adenosyl-L-methionine-binding positions include 89 to 90 (TT), 108 to 109 (EF), 133 to 134 (DA), and 153 to 156 (DIAQ).

Belongs to the methyltransferase superfamily. Fibrillarin family. In terms of assembly, interacts with nop5. Component of box C/D small ribonucleoprotein (sRNP) particles that contain rpl7ae, FlpA and nop5, plus a guide RNA.

Functionally, involved in pre-rRNA and tRNA processing. Utilizes the methyl donor S-adenosyl-L-methionine to catalyze the site-specific 2'-hydroxyl methylation of ribose moieties in rRNA and tRNA. Site specificity is provided by a guide RNA that base pairs with the substrate. Methylation occurs at a characteristic distance from the sequence involved in base pairing with the guide RNA. The polypeptide is Fibrillarin-like rRNA/tRNA 2'-O-methyltransferase (Methanopyrus kandleri (strain AV19 / DSM 6324 / JCM 9639 / NBRC 100938)).